Reading from the N-terminus, the 286-residue chain is ATP synthase gamma chain (286 aa).

The protein belongs to the ATPase gamma chain family. F-type ATPases have 2 components, CF(1) - the catalytic core - and CF(0) - the membrane proton channel. CF(1) has five subunits: alpha(3), beta(3), gamma(1), delta(1), epsilon(1). CF(0) has three main subunits: a, b and c.

It localises to the cell inner membrane. In terms of biological role, produces ATP from ADP in the presence of a proton gradient across the membrane. The gamma chain is believed to be important in regulating ATPase activity and the flow of protons through the CF(0) complex. The sequence is that of ATP synthase gamma chain from Pseudomonas putida (strain GB-1).